A 266-amino-acid polypeptide reads, in one-letter code: Imidazole glycerol phosphate synthase subunit HisF (266 aa).

Residues Asp-11 and Asp-130 contribute to the active site.

Belongs to the HisA/HisF family. As to quaternary structure, heterodimer of HisH and HisF.

The protein resides in the cytoplasm. The catalysed reaction is 5-[(5-phospho-1-deoxy-D-ribulos-1-ylimino)methylamino]-1-(5-phospho-beta-D-ribosyl)imidazole-4-carboxamide + L-glutamine = D-erythro-1-(imidazol-4-yl)glycerol 3-phosphate + 5-amino-1-(5-phospho-beta-D-ribosyl)imidazole-4-carboxamide + L-glutamate + H(+). It participates in amino-acid biosynthesis; L-histidine biosynthesis; L-histidine from 5-phospho-alpha-D-ribose 1-diphosphate: step 5/9. Its function is as follows. IGPS catalyzes the conversion of PRFAR and glutamine to IGP, AICAR and glutamate. The HisF subunit catalyzes the cyclization activity that produces IGP and AICAR from PRFAR using the ammonia provided by the HisH subunit. This Albidiferax ferrireducens (strain ATCC BAA-621 / DSM 15236 / T118) (Rhodoferax ferrireducens) protein is Imidazole glycerol phosphate synthase subunit HisF.